Consider the following 276-residue polypeptide: Bis(5'-nucleosyl)-tetraphosphatase, symmetrical (276 aa).

Belongs to the Ap4A hydrolase family.

It catalyses the reaction P(1),P(4)-bis(5'-adenosyl) tetraphosphate + H2O = 2 ADP + 2 H(+). Hydrolyzes diadenosine 5',5'''-P1,P4-tetraphosphate to yield ADP. This chain is Bis(5'-nucleosyl)-tetraphosphatase, symmetrical, found in Neisseria gonorrhoeae (strain ATCC 700825 / FA 1090).